We begin with the raw amino-acid sequence, 102 residues long: RNA-binding protein Hfq (102 aa).

Residues 9–68 (DPFLNALRRERVPVSIYLVNGIKLQGQIESFDQFVILLKNTVSQMVYKHAISTVVPSRPV) form the Sm domain. A disordered region spans residues 65 to 102 (SRPVSHHSSNTSVGASVGNYHSGGVSAPAAQQESDGTE). Residues 93–102 (AAQQESDGTE) show a composition bias toward polar residues.

It belongs to the Hfq family. As to quaternary structure, homohexamer.

In terms of biological role, RNA chaperone that binds small regulatory RNA (sRNAs) and mRNAs to facilitate mRNA translational regulation in response to envelope stress, environmental stress and changes in metabolite concentrations. Also binds with high specificity to tRNAs. This Photorhabdus laumondii subsp. laumondii (strain DSM 15139 / CIP 105565 / TT01) (Photorhabdus luminescens subsp. laumondii) protein is RNA-binding protein Hfq.